A 154-amino-acid polypeptide reads, in one-letter code: Immunity protein YwqK (154 aa).

As to quaternary structure, probably interacts with cognate toxin YwqJ but not with other non-cognate LXG toxins. The interaction inhibits the toxic activity of YwqJ.

The protein localises to the cytoplasm. Its function is as follows. Immunity component of one of 6 LXG toxin-immunity modules in this strain. They promote kin selection, mediate competition in biofilms, and drive spatial segregation of different strains, indicating that LXG toxins may help avoid warfare between strains in biofilms. Mediates intercellular competition during biofilm formation; disruption of the operon disadvantages the bacteria, but overexpression of the cognate immunity protein restores growth in competition with wild-type. In situ neutralizes the toxic effect of cognate toxin YqcG. Probably neutralizes the ability to inhibit growth of cognate toxin YwqJ. Probably does not have immunity protein activity on other LXG toxins. This is Immunity protein YwqK (ywqK) from Bacillus subtilis (strain 168).